The primary structure comprises 247 residues: Probable transcriptional regulatory protein Glov_1245 (247 aa).

Belongs to the TACO1 family.

It is found in the cytoplasm. In Trichlorobacter lovleyi (strain ATCC BAA-1151 / DSM 17278 / SZ) (Geobacter lovleyi), this protein is Probable transcriptional regulatory protein Glov_1245.